We begin with the raw amino-acid sequence, 85 residues long: U4-theraphotoxin-Hhn1a (85 aa).

Positions methionine 1–alanine 22 are cleaved as a signal peptide. Residues glutamate 23–arginine 48 constitute a propeptide that is removed on maturation. Disulfide bonds link cysteine 52–cysteine 66, cysteine 56–cysteine 77, and cysteine 71–cysteine 82.

It belongs to the neurotoxin 12 (Hwtx-2) family. 02 (Hwtx-2) subfamily. As to quaternary structure, monomer. Expressed by the venom gland.

It localises to the secreted. In terms of biological role, neurotoxin active on both insects and mammals. The protein is U4-theraphotoxin-Hhn1a of Cyriopagopus hainanus (Chinese bird spider).